Here is a 150-residue protein sequence, read N- to C-terminus: Large ribosomal subunit protein uL23 (150 aa).

The tract at residues 1–24 is disordered; the sequence is MNKENKTQAVNKAKNTAKVAKKGS. Positions 7-18 are enriched in low complexity; it reads TQAVNKAKNTAK.

This sequence belongs to the universal ribosomal protein uL23 family.

The protein is Large ribosomal subunit protein uL23 (RPL23A) of Tetrahymena thermophila (strain SB210).